Here is a 393-residue protein sequence, read N- to C-terminus: Formate-dependent phosphoribosylglycinamide formyltransferase (393 aa).

N(1)-(5-phospho-beta-D-ribosyl)glycinamide-binding positions include E22 to L23 and E82. ATP contacts are provided by residues R114, K155, S160–Q165, E195–V198, and E203. In terms of domain architecture, ATP-grasp spans R119–L308. Residues E267 and E279 each contribute to the Mg(2+) site. Residues D286, K356, and R363–R364 contribute to the N(1)-(5-phospho-beta-D-ribosyl)glycinamide site.

Belongs to the PurK/PurT family. In terms of assembly, homodimer.

The catalysed reaction is N(1)-(5-phospho-beta-D-ribosyl)glycinamide + formate + ATP = N(2)-formyl-N(1)-(5-phospho-beta-D-ribosyl)glycinamide + ADP + phosphate + H(+). Its pathway is purine metabolism; IMP biosynthesis via de novo pathway; N(2)-formyl-N(1)-(5-phospho-D-ribosyl)glycinamide from N(1)-(5-phospho-D-ribosyl)glycinamide (formate route): step 1/1. Involved in the de novo purine biosynthesis. Catalyzes the transfer of formate to 5-phospho-ribosyl-glycinamide (GAR), producing 5-phospho-ribosyl-N-formylglycinamide (FGAR). Formate is provided by PurU via hydrolysis of 10-formyl-tetrahydrofolate. This is Formate-dependent phosphoribosylglycinamide formyltransferase from Hydrogenovibrio crunogenus (strain DSM 25203 / XCL-2) (Thiomicrospira crunogena).